The following is a 145-amino-acid chain: Small t antigen (145 aa).

In terms of domain architecture, J spans 6 to 82 (RLTELLCLPV…PEESGYATFE (77 aa)). The interval 58 to 80 (EGLRADETLEDSDPEPEESGYAT) is disordered. Residues 65 to 75 (TLEDSDPEPEE) show a composition bias toward acidic residues.

In terms of assembly, interacts with host PPP2R1A; the interaction inhibits PP2A activity.

It localises to the host cytoplasm. The protein resides in the host nucleus. Its function is as follows. Promotes efficient viral genome replication by accelerating both G1 and S phase progression of the cell cycle. In Budgerigar fledgling disease virus (BFPyV), this protein is Small t antigen.